Here is a 317-residue protein sequence, read N- to C-terminus: MPREDRATWKSNYFLKIIQLLDDYPKCFIVGADNVGSKQMQQIRMSLRGKAVVLMGKNTMMRKAIRGHLENNPALEKLLPHIRGNVGFVFTKEDLTEIRDMLLANKVPAAARAGAIAPCEVTVPAQNTGLGPEKTSFFQALGITTKISRGTIEILSDVQLIKTGDKVGASEATLLNMLNISPFSFGLVIQQVFDNGSIYNPEVLDITEETLHSRFLEGVRNVASVCLQIGYPTVASVPHSIINGYKRVLALSVETDYTFPLAEKVKAFLADPSAFVAAAPVAAATTAAPAAAAAPAKVEAKEESEESDEDMGFGLFD.

Phosphotyrosine is present on Tyr24. Residue Thr59 is modified to Phosphothreonine. Lys264 is covalently cross-linked (Glycyl lysine isopeptide (Lys-Gly) (interchain with G-Cter in ubiquitin)). The interval Ala294–Asp317 is disordered. Lys297 is covalently cross-linked (Glycyl lysine isopeptide (Lys-Gly) (interchain with G-Cter in SUMO1); alternate). Residue Lys297 forms a Glycyl lysine isopeptide (Lys-Gly) (interchain with G-Cter in SUMO2); alternate linkage. Positions Glu302–Met311 are enriched in acidic residues. Phosphoserine occurs at positions 304 and 307.

Belongs to the universal ribosomal protein uL10 family. As to quaternary structure, P0 forms a pentameric complex by interaction with dimers of P1 and P2. Identified in a IGF2BP1-dependent mRNP granule complex containing untranslated mRNAs. Interacts with APEX1. Interacts with FMR1 isoform 6. Post-translationally, ubiquitinated at Lys-264 by RNF14 and RNF25 in response to ribosome collisions (ribosome stalling).

The protein resides in the nucleus. The protein localises to the cytoplasm. Functionally, ribosomal protein P0 is the functional equivalent of E.coli protein L10. The polypeptide is Large ribosomal subunit protein uL10 (RPLP0) (Homo sapiens (Human)).